The sequence spans 447 residues: Exodeoxyribonuclease 7 large subunit (447 aa).

The protein belongs to the XseA family. In terms of assembly, heterooligomer composed of large and small subunits.

Its subcellular location is the cytoplasm. It carries out the reaction Exonucleolytic cleavage in either 5'- to 3'- or 3'- to 5'-direction to yield nucleoside 5'-phosphates.. Functionally, bidirectionally degrades single-stranded DNA into large acid-insoluble oligonucleotides, which are then degraded further into small acid-soluble oligonucleotides. The sequence is that of Exodeoxyribonuclease 7 large subunit from Pediococcus pentosaceus (strain ATCC 25745 / CCUG 21536 / LMG 10740 / 183-1w).